The following is a 434-amino-acid chain: Trigger factor (434 aa).

One can recognise a PPIase FKBP-type domain in the interval 160–245 (DDKVKMNFIG…LTEVQAANLP (86 aa)).

The protein belongs to the FKBP-type PPIase family. Tig subfamily.

It is found in the cytoplasm. It carries out the reaction [protein]-peptidylproline (omega=180) = [protein]-peptidylproline (omega=0). Its function is as follows. Involved in protein export. Acts as a chaperone by maintaining the newly synthesized protein in an open conformation. Functions as a peptidyl-prolyl cis-trans isomerase. This chain is Trigger factor, found in Shewanella frigidimarina (strain NCIMB 400).